The primary structure comprises 146 residues: MAKTIQAYIKLQVSAGTANPSPPIGPALGQKGINIMEFCKAFNTRTNNLEKGLPIPTIITVYSDKSFSFITKTPPASVLLKKAAGITKGSSKPNQNKVGTITMQQILDIAQIKKIDMTGSNIDNISKSIIGTANSIGLIIAEGTNK.

This sequence belongs to the universal ribosomal protein uL11 family. As to quaternary structure, part of the ribosomal stalk of the 50S ribosomal subunit. Interacts with L10 and the large rRNA to form the base of the stalk. L10 forms an elongated spine to which L12 dimers bind in a sequential fashion forming a multimeric L10(L12)X complex. In terms of processing, one or more lysine residues are methylated.

Functionally, forms part of the ribosomal stalk which helps the ribosome interact with GTP-bound translation factors. This is Large ribosomal subunit protein uL11 from Buchnera aphidicola subsp. Baizongia pistaciae (strain Bp).